We begin with the raw amino-acid sequence, 281 residues long: Bifunctional protein FolD (281 aa).

NADP(+) contacts are provided by residues 165-167 (GRG), threonine 192, and valine 233.

The protein belongs to the tetrahydrofolate dehydrogenase/cyclohydrolase family. In terms of assembly, homodimer.

The catalysed reaction is (6R)-5,10-methylene-5,6,7,8-tetrahydrofolate + NADP(+) = (6R)-5,10-methenyltetrahydrofolate + NADPH. It catalyses the reaction (6R)-5,10-methenyltetrahydrofolate + H2O = (6R)-10-formyltetrahydrofolate + H(+). It functions in the pathway one-carbon metabolism; tetrahydrofolate interconversion. Functionally, catalyzes the oxidation of 5,10-methylenetetrahydrofolate to 5,10-methenyltetrahydrofolate and then the hydrolysis of 5,10-methenyltetrahydrofolate to 10-formyltetrahydrofolate. In Mycobacterium bovis (strain BCG / Tokyo 172 / ATCC 35737 / TMC 1019), this protein is Bifunctional protein FolD.